A 379-amino-acid polypeptide reads, in one-letter code: Mannitol-1-phosphate 5-dehydrogenase (379 aa).

3–14 (ALHFGAGNIGRG) provides a ligand contact to NAD(+).

Belongs to the mannitol dehydrogenase family.

It carries out the reaction D-mannitol 1-phosphate + NAD(+) = beta-D-fructose 6-phosphate + NADH + H(+). The polypeptide is Mannitol-1-phosphate 5-dehydrogenase (Bacillus licheniformis (strain ATCC 14580 / DSM 13 / JCM 2505 / CCUG 7422 / NBRC 12200 / NCIMB 9375 / NCTC 10341 / NRRL NRS-1264 / Gibson 46)).